The sequence spans 109 residues: Encapsulin nanocompartment cargo protein EncD (109 aa).

Position 47 (E47) interacts with Fe cation. Positions 61–94 (AGGRGAAAPTPAREAPAEAPRLARGSADELHEAA) are disordered. Low complexity predominate over residues 66 to 85 (AAAPTPAREAPAEAPRLARG). The interval 100 to 106 (LTVGSLR) is probable targeting peptide.

Its subcellular location is the encapsulin nanocompartment. Its function is as follows. Cargo protein of a type 1 encapsulin nanocompartment. May help nucleate Fe atoms in the interior of the encapsulin nanocompartment. Present in about 47 copies/encapsulin nanocompartment. The polypeptide is Encapsulin nanocompartment cargo protein EncD (Myxococcus xanthus (strain DK1622)).